We begin with the raw amino-acid sequence, 199 residues long: Probable chemoreceptor glutamine deamidase CheD (199 aa).

The protein belongs to the CheD family.

It catalyses the reaction L-glutaminyl-[protein] + H2O = L-glutamyl-[protein] + NH4(+). Probably deamidates glutamine residues to glutamate on methyl-accepting chemotaxis receptors (MCPs), playing an important role in chemotaxis. The polypeptide is Probable chemoreceptor glutamine deamidase CheD (Cereibacter sphaeroides (Rhodobacter sphaeroides)).